Here is a 98-residue protein sequence, read N- to C-terminus: Defensin (98 aa).

The N-terminal stretch at 1-19 (MRTFLVTFVLVVVVGVISA) is a signal peptide. Residues 20–58 (YPSNPVEVEAEDFDAQDPDLQTFQDTFYEVPQVHSRQKR) constitute a propeptide that is removed on maturation. 3 cysteine pairs are disulfide-bonded: Cys61–Cys88, Cys74–Cys94, and Cys78–Cys96.

In terms of tissue distribution, is synthesized by the fat body and eventually secreted into the hemolymph.

It localises to the secreted. Has antiparasitic activity against promastigote forms of L.major, and antibacterial activity against Gram-positive bacterium S.aureus. Has antifungal activity against the yeasts C.albicans and S.cerevisiae, but not C.glabrata. Has antifungal activity against filamentous fungi A.fumigatus, F.culmorum, F.oxysporum, N.crassa, T.viride and T.mentagrophytes, but not B.bassiana. This chain is Defensin, found in Phlebotomus duboscqi (Sandfly).